We begin with the raw amino-acid sequence, 148 residues long: Large ribosomal subunit protein uL15 (148 aa).

Residues M1–E51 form a disordered region. Over residues R21–S31 the composition is skewed to gly residues.

The protein belongs to the universal ribosomal protein uL15 family. Part of the 50S ribosomal subunit.

In terms of biological role, binds to the 23S rRNA. This chain is Large ribosomal subunit protein uL15, found in Porphyromonas gingivalis (strain ATCC BAA-308 / W83).